We begin with the raw amino-acid sequence, 4023 residues long: MSHSDQDERIAVIGTGCRFPGGCDSPSKLWDLLKAPRDVLREIPRERFDANAWYHPDNKHHGTSNVRSAYLLDQDPAAFDNEFFNIQSSEAEAVDPQQRILLETVYDSLCEAGCTIEGLRGSNTAVYVGLMCDDWSAIVTKDTEVFPQYAATGTSRSVMSNRVSYFFDWHGPSMTIDTACSSSLVAVHQAIHTLRSGESNVAIAAGANLILSPDMFIAESNLSMLSAGGRSRMWDRDVDGYARGEGIAAVVLKRLSDAVRDNDQIECVIRATSVNQDGKTAGLTMPSGTAQAALIRSTYARAGLDISNPRDRPQFFHAHGTGTAAGDPQEARAIHEAFYSGTARNTDKLYVGSVKTVIGHTEGTAGLASLISTSLAMRHKIIPPNMHFNNLNPRLKPYYRNLEVPTKAYPWPEPAPGHPRRASVNSFGFGGTNAHAIIEEYLPSQTRDLAEHTTAVSLLTPLVFSASSEISLRSLLASYSAYLKENLTISLQSLAYTLQARRSTMPHRVAITCNTTSELISAIDGIISGQENSTIAVRHLSKPTPKVLAVFTGQGAQWARMGAKLVETSPFVSKRLKELDEALATSAAGNSPQWTLSEMILAGPALSRVAEAAISQPLCTAVQIVLVDLLRQAGVRIDAVVGHSSGEIGAAYASGLYTARDAIRAAYYRGLYSSLAKSPNGGKGSMMAVSTTHQDAIEFCELETFEGRLQVAAVNSFDSITLSGDADAVAEACEVYQDEGAFARQLKVDTAYHSSHVLPCSKPYLEAMTSAGREALPKAPSDALPWPTWYSSVRDGQEMTREDVQPQYWVDNMANPVLFSTAVEAACSDKGLFDLIIEVGPHPALQKPCLDTVEETAGARPPYVGLLGRGKDDVSAFSKALGFIWTQLGPQSVAFDNVERAASEPPVVPRELLKDLPQYPFDHSSKFLSLSRVSGFYNRSQMATHPLLGKRCYDRETNLCIQWRNILSLKEVPWLTGHQIQGLTVFPAAGFVSMAIEAIVALAKDSTIGLLSLENVNIGRAMAFQDDSSRVEVLFDMRIIAQTPHEIAAEWASYSGDPHDIKTVLTLNASGVVRATLAENNASAEPDVLPALDVIDNNDLSPVDTERFYKFLRKLGYNYSWPFYGTKSIQRKAGFSTGMLEDQSGDEWQDQLLVHPGMIDTALQTAFAAFCCPGDERLWSLHVPTRFKSLVINPFFTARGIGKQRMLKFVSTAAAVKQGKIAAELYLQSEHEGQTHTFLQAEGLEIVPLAAAVPDNDTVLFSRFDYKLACADGETAAILDTPLSQDAIDDVINAERVAFYHLYNVVKSITPGEEASALPHYQQFLSWARNVVENVLRGDNKYVPASAAQDSASDIASLLTGLPFRFDKNGEVSLAEAIGKNLISAIRTSSTVFQAEDRNLPAELYEKAIGFDTGNQCLANMIASISHRYPRMNILEVGSQVGSSTEAILSQLDTAFDTYTYTNISDDSFGLAEEHFTAYGDRINFKTLDITQSPTSQGFALGEYDLVVASNVISSGSDMTESLTNLRALLKPGGFAVILEPVDNDCLRLGLALGCMPDRSPPLGLPQWNSLLSETGFSGTDTISPRSHGAVPGVVFCTQAIDDRIKMLRSPLSNISCLPGLEAPELAIVGRGQSSELQNLCGELSDLLSSAFPKVTFVDSVEQVTAETIPTTSAVIMLAELGESPWASLNPVKLEGIKNIYRQARNLLWVTSGADSKDPYSNISLGIGRAMQFEYPHLSIQALDVDTISENTAKIIAEHLLRLGTLSTWKEDPEQPTMLWSMEPEVWIKNDMPIIPRLCPYTPGNDRYNTTRRTVRNQVIPRDTHLALTNDNGAWEVQVTSPLHQAPKIPYATDTKQVRVTDVLLSTLGIIPGTMLMLCTGQDTSTGEALLALSPIAETLVQVPRSWTTGIDNAEPRDALGAVAANIVAKLMAKSAFRGDVLIVHDPHPAVAHELAIIANKGAFTIHFTTASAQVSIEQGWHHIGSRFSASKVKSLLPINANKLLDLSKSSADGISAHILSSLPRGCRVVDMSHIMGNTTELQSWVSEDEVATVLQESVTEVLRSDRYTNLVNNVPLVSLESISEPTHHASFAIADCSVPAVTARVRAVDDGIIFRGDNTYLLVGLTGEIGRSLCKWMAERGARHIVLTSRTPKEDVVFSSAMKALGAVVKYLPMDVRSRDSIHACYAMIQNTMPPVAGVANGAMIIHDMVFDNMSFEVMDKVLAPKVVGSQLLDELFYDTPLDFFIFFSSMTAVMGNSGQANYLAGNMYMNALAAQRKERGVAGSSINISSVIGVGYVERSDQLDEEYFLNMGYRPMSEQDLQVSFAEAIVLGKPGSSEIAELSTGINSTLNGQSIGKWLQDIKFSHMMMHESNDNAGMGPGASAAPLKVQLSEAKSKEDIISIIKEVFLARLRRILSIPADKNINEDVTLVEQGVDSLMAVEVRSFFNKELDVDIPVLKILGDISINGIIKQVVELLPAAVYDLPEETPQTLSKNPAPTPVKAPVSAPSTPAAASQPVLTDSTASSSRDSDDDQASSNSTSYETSKDASREDSEVDETPLESPVNTPNVMSKPSASSQLLEKKQLLEVDALIASSRPETLAPMSHGQEGFWFLQDYLPDKTVFNTSVMLKLEGEISVETLSQALQMVARRHEILRTRFFSADDDGEQKVMQAIAANSSLELETKQITSGNEAQVEFTRFNKHVFDLANGEAARVLLLSLSKTEHFLMAGMHHIYLDGYSFSIFFNDLNTAYTSKRLPPLPSNSQYRSFVEQERERYESGEFDETIAHYRETLPKDLAPIELLPFARGTTRREVNNYDQTESKMRIDRPLADKIRQLARNNRSTSFHVFLAAFQALLFQLLPESDDLIIGMGDANRDDKKYLNSIGYFFNLLPLHFSRFKSGTKIADLVQDSRSAVREALERPHVPLSILLDELDVPRSNKHTPLFQVCIDHRQVLQEQSNWGGCRVSDEQWHDAGTGFDISLQITEFNTDASLSLRLQKPMYTEEHTNMLLRSFVAVLEHMADVPTDNMVEDIPSWSELDIQKALTVGKGREFHSRWDSNPPTVMHRIHEMITVHGSTTALKDGHGSTLSYEQMGRRIAAISAALIEKGIARGDVIGVFQEPSVDWICSMMAIFNIGATYMALDQRLTLPRLATIVQTAKPAAILTDSFTSSQVTDIGASAITTVLVSHLASSVNTKPINAARAEDVAVVLFTSGSTGVPKGMRMTHANLVFSTDSISGAFNVTQESMVLQQSPFSFDPSLCQTLVALTNGAALYVVPSRSRGDPMAVTKIMAEEKVTFTVGTPSEYAMLLEYGADNIRQCHAWKCAAWGGEQMPHGLAKQLAAANLPGLKAHNVYGPSETTMLSHFHLVNPAEIEGNGYIPVGAGFDGYKYCIVDHQMRVQPIGVPGEIIIGGPAVVAGYLNNQQLTDTKFLADSFFGTNGKVYRSGDLGRMLEDGTLVVEGRLDGDDLIKLRGFRIELEEIEKAIVKQADGTLGDAIVSLRGEGDAQFLAAHVTLSADLSPPAKQKLISALQRLPLSSYMIPSVFGVIKAIPKTAHDKVDRKAAKELPLPSADDENSLAVHGIDGGDDSVLSGTERQLGTLWRQVIPVYVGSLASTSDFFLAGGNSLLLVKLQALLRTEFGATPKLMDLMGASNLAAMADAVQKEVDSSLTRDGIDWDLETRPPVALQHKLSGFISSARTNTTRPDASRFNVLLTGATGQLGRHVLSQLVTNGKTSRVICLTRQPDKIEANDKVTTLRGDVSEPNFGLSEQEYQQLATETDVIMHCVANRSFWDRYEVLQPVNVSAVKSLVGLIADSGRIIPLHFMSSGAVSHYYNLGTSPPRDGSDGYVASKWAAEGFLRRIAAETSIPIYIHRPSSVDGDALGSPQEREAVTDQLMGIVNSMEIQPEFGGVDGTLDIAPVDDMAQSLAELVLKSITEAAETDGSEKNLIQEFKHKAALQVYARDFAARLESEGQHAQFPKMPILEWFGQAKAAGFSYIIAAQELVMTSGLDAITTRR.

The Ketosynthase family 3 (KS3) domain maps to 7–440 (DERIAVIGTG…GTNAHAIIEE (434 aa)). Active-site for beta-ketoacyl synthase activity residues include Cys-180, His-319, and His-360. The interval 550 to 871 (VFTGQGAQWA…PYVGLLGRGK (322 aa)) is malonyl-CoA:ACP transacylase (MAT) domain. An N-terminal hotdog fold region spans residues 945-1080 (HPLLGKRCYD…GVVRATLAEN (136 aa)). The tract at residues 945–1249 (HPLLGKRCYD…QAEGLEIVPL (305 aa)) is dehydratase (DH) domain. One can recognise a PKS/mFAS DH domain in the interval 945 to 1255 (HPLLGKRCYD…IVPLAAAVPD (311 aa)). The Proton acceptor; for dehydratase activity role is filled by His-978. The interval 1099–1255 (DLSPVDTERF…IVPLAAAVPD (157 aa)) is C-terminal hotdog fold. Asp-1160 (proton donor; for dehydratase activity) is an active-site residue. The segment at 1402–1585 (AELYEKAIGF…GFSGTDTISP (184 aa)) is methyltransferase (MT) domain. The interval 2120–2291 (TYLLVGLTGE…GVAGSSINIS (172 aa)) is ketoreductase (KR) domain. The Carrier 1 domain maps to 2404–2479 (SIIKEVFLAR…GIIKQVVELL (76 aa)). Ser-2439 is subject to O-(pantetheine 4'-phosphoryl)serine. The tract at residues 2490–2580 (TPQTLSKNPA…VMSKPSASSQ (91 aa)) is disordered. Positions 2502-2529 (PVKAPVSAPSTPAAASQPVLTDSTASSS) are enriched in low complexity. A compositionally biased stretch (polar residues) spans 2565–2580 (PVNTPNVMSKPSASSQ). The interval 2604–3043 (PMSHGQEGFW…DIPSWSELDI (440 aa)) is condensation (C) domain. The interval 3072–3467 (EMITVHGSTT…DGTLVVEGRL (396 aa)) is adenylation (A) (KR) domain. The Carrier 2 domain maps to 3593–3670 (SVLSGTERQL…AMADAVQKEV (78 aa)). Ser-3630 is subject to O-(pantetheine 4'-phosphoryl)serine. The interval 3783–3932 (ETDVIMHCVA…IAPVDDMAQS (150 aa)) is reductase (RED) domain.

The protein in the C-terminal section; belongs to the NRP synthetase family.

The protein operates within secondary metabolite biosynthesis. Its function is as follows. Hybrid PKS-NRPS synthetase; part of the gene cluster that mediates the biosynthesis of varicidin A, an antifungal natural product containing a cis-octahydrodecalin core. The PKS module of pvhA together with the enoylreductase pvhC catalyze the formation of the polyketide unit which is then conjugated to L-isoleucine by the condensation domain of the NRPS module. Activity of the Dieckmann cyclase domain (RED) of pvhA results in release of an acyclic tetramate. The cytochrome P450 monooxygenase pvhE then catalyzes the oxidation of the C21 methyl group to a to carboxylate group. The methyltransferase pvhD then further methylates the pvhE product. The Diels-Alderase pvhB is able to catalyze Diels-Alder cycloaddition using both pvhE and pvhD products as substrates to form the decalin ring, yielding varicidin B and A, respectively. The chain is Hybrid PKS-NRPS synthetase pvhA from Talaromyces variabilis (Penicillium variabile).